A 285-amino-acid chain; its full sequence is Bifunctional protein FolD (285 aa).

NADP(+) contacts are provided by residues 165-167 (GRG), T192, and V233.

The protein belongs to the tetrahydrofolate dehydrogenase/cyclohydrolase family. In terms of assembly, homodimer.

It carries out the reaction (6R)-5,10-methylene-5,6,7,8-tetrahydrofolate + NADP(+) = (6R)-5,10-methenyltetrahydrofolate + NADPH. It catalyses the reaction (6R)-5,10-methenyltetrahydrofolate + H2O = (6R)-10-formyltetrahydrofolate + H(+). The protein operates within one-carbon metabolism; tetrahydrofolate interconversion. In terms of biological role, catalyzes the oxidation of 5,10-methylenetetrahydrofolate to 5,10-methenyltetrahydrofolate and then the hydrolysis of 5,10-methenyltetrahydrofolate to 10-formyltetrahydrofolate. This is Bifunctional protein FolD from Mycobacterium sp. (strain MCS).